The primary structure comprises 242 residues: C-reactive protein 1.1 (242 aa).

Residues 1–24 (MKTFHGPTCGTAVSLCLLLFLTSA) form the signal peptide. Residues 30–241 (ITSKVKFPPS…GVVLSPNEIC (212 aa)) enclose the Pentraxin (PTX) domain. The phosphocholine site is built by Thr-60 and Tyr-63. Intrachain disulfides connect Cys-62–Cys-125 and Cys-112–Cys-144. Ca(2+)-binding residues include Asp-85 and Asn-86. An N-linked (GlcNAc...) asparagine glycan is attached at Asn-147. Ca(2+) contacts are provided by Gln-169, Asp-170, and Gln-180. Cys-207 and Cys-241 are oxidised to a cystine.

Belongs to the pentraxin family. In terms of assembly, homopentamer. Pentraxin (or pentaxin) have a discoid arrangement of 5 non-covalently bound subunits. Ca(2+) is required as a cofactor.

It is found in the secreted. Functionally, might serve the role of immunoglobulins. The chain is C-reactive protein 1.1 from Limulus polyphemus (Atlantic horseshoe crab).